Here is a 243-residue protein sequence, read N- to C-terminus: Auxin-induced protein AUX28 (243 aa).

The short motif at 8–12 (LRLGL) is the EAR-like (transcriptional repression) element. The interval 54-91 (AATTAAAAADPTDKHKTLPKEKTLLPADPAKPPAKTQV) is disordered. Residues 64–76 (PTDKHKTLPKEKT) show a composition bias toward basic and acidic residues. Residues 77 to 89 (LLPADPAKPPAKT) show a composition bias toward low complexity. Residues 123–223 (ASFVKVSMDG…SCKRLRIMKG (101 aa)) form the PB1 domain.

Belongs to the Aux/IAA family. In terms of assembly, homodimers and heterodimers.

It is found in the nucleus. Functionally, aux/IAA proteins are short-lived transcriptional factors that function as repressors of early auxin response genes at low auxin concentrations. Repression is thought to result from the interaction with auxin response factors (ARFs), proteins that bind to the auxin-responsive promoter element (AuxRE). Formation of heterodimers with ARF proteins may alter their ability to modulate early auxin response genes expression. This Glycine max (Soybean) protein is Auxin-induced protein AUX28 (AUX28).